The chain runs to 141 residues: Hemoglobin subunit alpha-A (141 aa).

Residues V1–R141 enclose the Globin domain. Residue H58 participates in O2 binding. Residue H87 participates in heme b binding.

Belongs to the globin family. In terms of assembly, heterotetramer of two alpha chains and two beta chains. As to expression, red blood cells.

Its function is as follows. Involved in oxygen transport from the lung to the various peripheral tissues. The chain is Hemoglobin subunit alpha-A (HBAA) from Rhea americana (Greater rhea).